We begin with the raw amino-acid sequence, 813 residues long: MAEKYNPQETEKKWQDKWAADRLYHASEDSPKPKWYSLTMFPYTSGNLHIGHWYAEVPADCFARYKRLRGFNVMRPVGFDSFGLPAENAAIKHNIHPRIWTLNNVENMRRQLKTIGAMFDWDREVITCLPEYYKWTQWFFLKLYEAGLAYRAKAPVNWCPSCQAVLANEQVVDGTCWRCETPTTRRDLEQWFFRITNYADELKDHEGLDWPEKITAMQRNWVGKSYGAEVSFALDCPTAFEKEIKVFTTRPDTIYGVTFMVLAPEHPLVEKITTPENKAAVDAYIKKSRTCTEIERLSTEREKDGVFTGTYVTNRVNGQKVPVWIGDYVLQSYGTGAVMGVPAHDERDFVFAQKYHLPVITVIAPSEYDGKPLEVAYINEGVMLNSGPFNGTPNTEGKEKVCDYLAEHGWGKKTVNYKLRDWLISRQRYWGAPIPMVYCEKCGIVPVPEKDLPVLLPEDVEFRSGGESPLKYNEGFVNTICPVCGGKAKRETDTMDTFMCSSWYFLRYTSPGYDKGPFDPVKLKYWMPVDLYTGGAEHAVMHLFYSRFFTKALRDMGIIDFGEPFKKLFNQGIIVSNHQKMSKSKGNVVTPDNLVAEVGTDAVRAYLMFVGPWDQGGEWNDSGLSGMSRWLNRVWNLFTEEYTPQTASAEAERELKRTLHQTIKKITMDIERLRFNTVVAALMELSNSLAKLKETAAISAENWQNTLQTFALMLAPVAPHIAEELWANLGMKYSIHNQNWPTWDEELAKDEVITLIIQVNGKLRERLEMPAGISEAEAKETALNSERVKPHLLGKTPVTVIYVPGKLVNIVVK.

The short motif at 42 to 52 (PYTSGNLHIGH) is the 'HIGH' region element. The 'KMSKS' region motif lies at 580-584 (KMSKS). Lys-583 serves as a coordination point for ATP.

Belongs to the class-I aminoacyl-tRNA synthetase family.

Its subcellular location is the cytoplasm. The catalysed reaction is tRNA(Leu) + L-leucine + ATP = L-leucyl-tRNA(Leu) + AMP + diphosphate. The protein is Leucine--tRNA ligase of Dehalococcoides mccartyi (strain CBDB1).